The chain runs to 236 residues: Protein CUSTOS (236 aa).

Disordered regions lie at residues 1 to 57 and 83 to 236; these read MSES…GTTP and VEPA…KKDE. Basic and acidic residues-rich tracts occupy residues 10–51 and 156–165; these read NTAR…HDGN and EKTEEKSTKE. The short motif at 173-181 is the Nucleolar localization signal (NLS1) element; sequence KMKKKKKRK. Residues 182-196 show a composition bias toward basic and acidic residues; it reads TSSEESQDKVNHQTE. The segment covering 197–210 has biased composition (polar residues); that stretch reads KQSNVEGNQEQTTA. A Nucleolar localization signal (NLS2) motif is present at residues 211–219; that stretch reads GERLKKKKK. Residues 214 to 227 are compositionally biased toward basic residues; it reads LKKKKKKKKKKRKK.

This sequence belongs to the CUSTOS family. In terms of assembly, interacts (via NLS1 and NLS2) with dvl2; the interaction is negatively regulated by Wnt stimulation. Interacts with csnk1a1. Interacts with ctnnb1; the interaction is positively regulated by Wnt stimulation. In terms of processing, phosphorylated by ck1/csnk1a1.

It localises to the nucleus envelope. Its function is as follows. Essential for Spemann-Mangold organizer formation and subsequent anterior head development in the embryo. Inhibits canonical Wnt signaling pathway by antagonizing nuclear import of beta-catenin (ctnnb1) during embryogenesis. The protein is Protein CUSTOS of Danio rerio (Zebrafish).